The chain runs to 123 residues: Transmembrane protein 254 (123 aa).

Alanine 2 bears the N-acetylalanine mark. Helical transmembrane passes span 15–35 (LFWFTVITLSFGYYTWVVFWP), 61–81 (LCNGYWLAWLIHVGESLYAIV), and 95–115 (LLWFLQTFFFGIASLTILIAY).

The protein resides in the membrane. The polypeptide is Transmembrane protein 254 (TMEM254) (Homo sapiens (Human)).